Consider the following 400-residue polypeptide: Acetylornithine aminotransferase (400 aa).

Residues 113 to 114 and phenylalanine 139 each bind pyridoxal 5'-phosphate; that span reads GA. Arginine 142 lines the N(2)-acetyl-L-ornithine pocket. Residue 224–227 participates in pyridoxal 5'-phosphate binding; it reads DEVQ. Residue lysine 253 is modified to N6-(pyridoxal phosphate)lysine. Residue serine 281 participates in N(2)-acetyl-L-ornithine binding. Position 282 (threonine 282) interacts with pyridoxal 5'-phosphate.

This sequence belongs to the class-III pyridoxal-phosphate-dependent aminotransferase family. ArgD subfamily. Homodimer. Pyridoxal 5'-phosphate serves as cofactor.

It is found in the cytoplasm. The enzyme catalyses N(2)-acetyl-L-ornithine + 2-oxoglutarate = N-acetyl-L-glutamate 5-semialdehyde + L-glutamate. It functions in the pathway amino-acid biosynthesis; L-arginine biosynthesis; N(2)-acetyl-L-ornithine from L-glutamate: step 4/4. The chain is Acetylornithine aminotransferase from Mycobacterium bovis (strain ATCC BAA-935 / AF2122/97).